The chain runs to 156 residues: Arginine repressor (156 aa).

Belongs to the ArgR family.

The protein resides in the cytoplasm. The protein operates within amino-acid biosynthesis; L-arginine biosynthesis [regulation]. In terms of biological role, regulates arginine biosynthesis genes. This chain is Arginine repressor, found in Edwardsiella ictaluri (strain 93-146).